The chain runs to 284 residues: Putative L-ribulose-5-phosphate 3-epimerase UlaE (284 aa).

The protein belongs to the L-ribulose-5-phosphate 3-epimerase family.

The catalysed reaction is L-ribulose 5-phosphate = L-xylulose 5-phosphate. The protein operates within cofactor degradation; L-ascorbate degradation; D-xylulose 5-phosphate from L-ascorbate: step 3/4. In terms of biological role, catalyzes the isomerization of L-xylulose-5-phosphate to L-ribulose-5-phosphate. Is involved in the anaerobic L-ascorbate utilization. This chain is Putative L-ribulose-5-phosphate 3-epimerase UlaE, found in Shigella dysenteriae serotype 1 (strain Sd197).